The chain runs to 466 residues: Ribulose bisphosphate carboxylase large chain (466 aa).

N6,N6,N6-trimethyllysine is present on Lys-5. The substrate site is built by Asn-114 and Thr-164. Lys-166 functions as the Proton acceptor in the catalytic mechanism. Lys-168 lines the substrate pocket. Residues Lys-192, Asp-194, and Glu-195 each coordinate Mg(2+). The residue at position 192 (Lys-192) is an N6-carboxylysine. His-285 functions as the Proton acceptor in the catalytic mechanism. Residues Arg-286, His-318, and Ser-370 each coordinate substrate.

The protein belongs to the RuBisCO large chain family. Type I subfamily. Heterohexadecamer of 8 large chains and 8 small chains; disulfide-linked. The disulfide link is formed within the large subunit homodimers. Mg(2+) is required as a cofactor. Post-translationally, the disulfide bond which can form in the large chain dimeric partners within the hexadecamer appears to be associated with oxidative stress and protein turnover.

It localises to the plastid. The protein resides in the chloroplast. The enzyme catalyses 2 (2R)-3-phosphoglycerate + 2 H(+) = D-ribulose 1,5-bisphosphate + CO2 + H2O. It catalyses the reaction D-ribulose 1,5-bisphosphate + O2 = 2-phosphoglycolate + (2R)-3-phosphoglycerate + 2 H(+). Functionally, ruBisCO catalyzes two reactions: the carboxylation of D-ribulose 1,5-bisphosphate, the primary event in carbon dioxide fixation, as well as the oxidative fragmentation of the pentose substrate in the photorespiration process. Both reactions occur simultaneously and in competition at the same active site. The polypeptide is Ribulose bisphosphate carboxylase large chain (Cercidiphyllum japonicum (Katsura tree)).